Consider the following 296-residue polypeptide: 3-methyl-2-oxobutanoate hydroxymethyltransferase (296 aa).

Residues Met1 to Arg33 are disordered. A compositionally biased stretch (low complexity) spans Asp16–Pro25. Residues Asp77 and Asp116 each contribute to the Mg(2+) site. 3-methyl-2-oxobutanoate is bound by residues Asp77–Ser78, Asp116, and Lys146. Mg(2+) is bound at residue Glu148. The active-site Proton acceptor is Glu214.

Belongs to the PanB family. In terms of assembly, homodecamer; pentamer of dimers. Mg(2+) serves as cofactor.

It localises to the cytoplasm. It carries out the reaction 3-methyl-2-oxobutanoate + (6R)-5,10-methylene-5,6,7,8-tetrahydrofolate + H2O = 2-dehydropantoate + (6S)-5,6,7,8-tetrahydrofolate. It participates in cofactor biosynthesis; (R)-pantothenate biosynthesis; (R)-pantoate from 3-methyl-2-oxobutanoate: step 1/2. Its function is as follows. Catalyzes the reversible reaction in which hydroxymethyl group from 5,10-methylenetetrahydrofolate is transferred onto alpha-ketoisovalerate to form ketopantoate. This is 3-methyl-2-oxobutanoate hydroxymethyltransferase from Frankia casuarinae (strain DSM 45818 / CECT 9043 / HFP020203 / CcI3).